Here is a 228-residue protein sequence, read N- to C-terminus: DNA mismatch repair protein MutH (228 aa).

This sequence belongs to the MutH family.

The protein localises to the cytoplasm. Its function is as follows. Sequence-specific endonuclease that cleaves unmethylated GATC sequences. It is involved in DNA mismatch repair. The protein is DNA mismatch repair protein MutH of Photorhabdus laumondii subsp. laumondii (strain DSM 15139 / CIP 105565 / TT01) (Photorhabdus luminescens subsp. laumondii).